A 161-amino-acid chain; its full sequence is Nucleotide-binding protein PputW619_0959 (161 aa).

This sequence belongs to the YajQ family.

In terms of biological role, nucleotide-binding protein. This is Nucleotide-binding protein PputW619_0959 from Pseudomonas putida (strain W619).